A 274-amino-acid polypeptide reads, in one-letter code: 2,3,4,5-tetrahydropyridine-2,6-dicarboxylate N-succinyltransferase (274 aa).

Residues R104 and D141 each coordinate substrate.

The protein belongs to the transferase hexapeptide repeat family. Homotrimer.

It localises to the cytoplasm. The catalysed reaction is (S)-2,3,4,5-tetrahydrodipicolinate + succinyl-CoA + H2O = (S)-2-succinylamino-6-oxoheptanedioate + CoA. It participates in amino-acid biosynthesis; L-lysine biosynthesis via DAP pathway; LL-2,6-diaminopimelate from (S)-tetrahydrodipicolinate (succinylase route): step 1/3. This is 2,3,4,5-tetrahydropyridine-2,6-dicarboxylate N-succinyltransferase from Salmonella choleraesuis (strain SC-B67).